A 304-amino-acid polypeptide reads, in one-letter code: ATP synthase gamma chain (304 aa).

It belongs to the ATPase gamma chain family. As to quaternary structure, F-type ATPases have 2 components, CF(1) - the catalytic core - and CF(0) - the membrane proton channel. CF(1) has five subunits: alpha(3), beta(3), gamma(1), delta(1), epsilon(1). CF(0) has three main subunits: a, b and c.

It localises to the cell membrane. Functionally, produces ATP from ADP in the presence of a proton gradient across the membrane. The gamma chain is believed to be important in regulating ATPase activity and the flow of protons through the CF(0) complex. This Chloroherpeton thalassium (strain ATCC 35110 / GB-78) protein is ATP synthase gamma chain.